The following is an 88-amino-acid chain: Small ribosomal subunit protein bS20 (88 aa).

Belongs to the bacterial ribosomal protein bS20 family.

Binds directly to 16S ribosomal RNA. This Rhodopseudomonas palustris (strain BisB18) protein is Small ribosomal subunit protein bS20.